A 216-amino-acid chain; its full sequence is Eukaryotic translation initiation factor isoform 4E-2 (216 aa).

Residues 1-23 are disordered; that stretch reads MAEVEAPATAVEAPAAAVATTTP. Cysteines 113 and 152 form a disulfide.

It belongs to the eukaryotic initiation factor 4E family. In terms of assembly, EIF4F is a multi-subunit complex, the composition of which varies with external and internal environmental conditions. It is composed of at least EIF4A, EIF4E and EIF4G. EIF4E is also known to interact with other partners. In higher plants two isoforms of EIF4F have been identified, named isoform EIF4F and isoform EIF(iso)4F. Isoform EIF4F has subunits p220 and p26, whereas isoform EIF(iso)4F has subunits p82 and p28. In terms of processing, according to the redox status, the Cys-113-Cys-152 disulfide bridge may have a role in regulating protein function by affecting its ability to bind capped mRNA.

Recognizes and binds the 7-methylguanosine-containing mRNA cap during an early step in the initiation of protein synthesis and facilitates ribosome binding by inducing the unwinding of the mRNAs secondary structures. The sequence is that of Eukaryotic translation initiation factor isoform 4E-2 from Zea mays (Maize).